Here is a 42-residue protein sequence, read N- to C-terminus: Photosystem I reaction center subunit IX (42 aa).

The helical transmembrane segment at 7–27 (FLSTAPVLIMALLTFTAGLLI) threads the bilayer.

This sequence belongs to the PsaJ family.

The protein localises to the cellular thylakoid membrane. May help in the organization of the PsaE and PsaF subunits. The chain is Photosystem I reaction center subunit IX from Rippkaea orientalis (strain PCC 8801 / RF-1) (Cyanothece sp. (strain PCC 8801)).